A 588-amino-acid polypeptide reads, in one-letter code: Proline--tRNA ligase (588 aa).

The protein belongs to the class-II aminoacyl-tRNA synthetase family. ProS type 1 subfamily. In terms of assembly, homodimer.

It localises to the cytoplasm. The catalysed reaction is tRNA(Pro) + L-proline + ATP = L-prolyl-tRNA(Pro) + AMP + diphosphate. Catalyzes the attachment of proline to tRNA(Pro) in a two-step reaction: proline is first activated by ATP to form Pro-AMP and then transferred to the acceptor end of tRNA(Pro). As ProRS can inadvertently accommodate and process non-cognate amino acids such as alanine and cysteine, to avoid such errors it has two additional distinct editing activities against alanine. One activity is designated as 'pretransfer' editing and involves the tRNA(Pro)-independent hydrolysis of activated Ala-AMP. The other activity is designated 'posttransfer' editing and involves deacylation of mischarged Ala-tRNA(Pro). The misacylated Cys-tRNA(Pro) is not edited by ProRS. This Helicobacter hepaticus (strain ATCC 51449 / 3B1) protein is Proline--tRNA ligase.